We begin with the raw amino-acid sequence, 1037 residues long: PH and SEC7 domain-containing protein 3 (1037 aa).

The tract at residues 37–70 is disordered; that stretch reads EEKTPDSSDHGGSTLLPPTVTNEFPEYGTMEEGG. Position 76 is a phosphoserine (Ser-76). Disordered regions lie at residues 169 to 189, 236 to 255, 262 to 284, 304 to 335, and 353 to 375; these read TASHKPQRAHRTFPVGPGKSP, RVPESACPVSSSSAGSHNPV, REQRSDLGREHPRGYDRGGSMGR, EAESRHPPERTASPVSKEFAKRPSHSSPACGV, and APSERPGTSAGTLSPMPLGESGE. Over residues 237–251 the composition is skewed to low complexity; that stretch reads VPESACPVSSSSAGS. Over residues 262 to 277 the composition is skewed to basic and acidic residues; sequence REQRSDLGREHPRGYD. One can recognise an SEC7 domain in the interval 515-723; it reads NSVYTRGPQE…KALYNSIKNE (209 aa). Residues 730-747 show a composition bias toward basic and acidic residues; it reads DDEEKKKSPSEGTDEKAN. Residues 730–762 form a disordered region; sequence DDEEKKKSPSEGTDEKANGTHPKTISRIGSTTN. A compositionally biased stretch (polar residues) spans 750-762; that stretch reads HPKTISRIGSTTN. Ser-759 carries the post-translational modification Phosphoserine. Residues 774–887 form the PH domain; the sequence is AVYKSGFLAR…WINKINCVAA (114 aa). The stretch at 911–941 forms a coiled coil; the sequence is ATTTKLSQEEQLKSHESKLKQITTELAEHRS. The segment at 984 to 1037 is disordered; it reads LLTTDGNEPVGLKKSHSSPSLNPDASPVTAKVKRNVSERKDHRPETPGIKQKVT. 5 positions are modified to phosphoserine: Ser-998, Ser-1000, Ser-1001, Ser-1003, and Ser-1009. Positions 1018–1028 are enriched in basic and acidic residues; sequence NVSERKDHRPE.

In terms of tissue distribution, ubiquitously expressed, with highest levels in liver. Present in brain, with highest levels in olfactory bulb, cortex, hippocampal pyramidal cell layer and cerebellar granule cell layer (at protein level).

It localises to the cell membrane. It is found in the cell projection. The protein localises to the ruffle membrane. The protein resides in the postsynaptic density. Guanine nucleotide exchange factor for ARF6. In Mus musculus (Mouse), this protein is PH and SEC7 domain-containing protein 3 (Psd3).